The following is a 366-amino-acid chain: Ubiquitin carboxyl-terminal hydrolase 46 (366 aa).

Residues 35–365 (FGLVNFGNTC…SGYILFYQSR (331 aa)) enclose the USP domain. Catalysis depends on Cys44, which acts as the Nucleophile. Cys182, Cys185, Cys229, and Cys232 together coordinate Zn(2+). The active-site Proton acceptor is His313.

Belongs to the peptidase C19 family. USP12/USP46 subfamily. In terms of assembly, interacts with WDR48. Interacts with WDR20. Interacts with DMWD. Component of the USP46/WDR20/WDR48 deubiquitinating complex. Broadly expressed.

It localises to the cytoplasm. The enzyme catalyses Thiol-dependent hydrolysis of ester, thioester, amide, peptide and isopeptide bonds formed by the C-terminal Gly of ubiquitin (a 76-residue protein attached to proteins as an intracellular targeting signal).. Activated by interaction with WDR48. Deubiquitinating enzyme that plays a role in behavior, possibly by regulating GABA action. May act by mediating the deubiquitination of GAD1/GAD67. Has almost no deubiquitinating activity by itself and requires the interaction with WDR48 to have a high activity. Not involved in deubiquitination of monoubiquitinated FANCD2. The chain is Ubiquitin carboxyl-terminal hydrolase 46 (USP46) from Homo sapiens (Human).